Reading from the N-terminus, the 640-residue chain is 1-deoxy-D-xylulose-5-phosphate synthase (640 aa).

Residues histidine 79 and 120–122 each bind thiamine diphosphate; that span reads GHS. Aspartate 151 is a Mg(2+) binding site. Thiamine diphosphate is bound by residues 152-153, asparagine 180, tyrosine 290, and glutamate 372; that span reads GS. Asparagine 180 contacts Mg(2+).

This sequence belongs to the transketolase family. DXPS subfamily. As to quaternary structure, homodimer. Mg(2+) serves as cofactor. The cofactor is thiamine diphosphate.

The catalysed reaction is D-glyceraldehyde 3-phosphate + pyruvate + H(+) = 1-deoxy-D-xylulose 5-phosphate + CO2. Its pathway is metabolic intermediate biosynthesis; 1-deoxy-D-xylulose 5-phosphate biosynthesis; 1-deoxy-D-xylulose 5-phosphate from D-glyceraldehyde 3-phosphate and pyruvate: step 1/1. Catalyzes the acyloin condensation reaction between C atoms 2 and 3 of pyruvate and glyceraldehyde 3-phosphate to yield 1-deoxy-D-xylulose-5-phosphate (DXP). The sequence is that of 1-deoxy-D-xylulose-5-phosphate synthase from Rhodopseudomonas palustris (strain BisA53).